A 147-amino-acid polypeptide reads, in one-letter code: Low molecular weight protein-tyrosine-phosphatase Wzb (147 aa).

Residue C9 is the Nucleophile of the active site. The active site involves R15. D115 serves as the catalytic Proton donor.

This sequence belongs to the low molecular weight phosphotyrosine protein phosphatase family.

It catalyses the reaction O-phospho-L-tyrosyl-[protein] + H2O = L-tyrosyl-[protein] + phosphate. The protein operates within glycan metabolism; exopolysaccharide biosynthesis. Its function is as follows. Dephosphorylates Wzc. Required for the extracellular polysaccharide colanic acid synthesis. Probably involved in the export of colanic acid from the cell to medium. Involved in protection of cells against contact-dependent growth inhibition (CDI). The protein is Low molecular weight protein-tyrosine-phosphatase Wzb (wzb) of Escherichia coli O157:H7.